Here is a 188-residue protein sequence, read N- to C-terminus: MQLVVARIGRAHGIKGEVTVEVRTDEPELRLGPGAVLATDPASTGPLTIESGRVHSGRLLLRFAGVHDRTGAEALRNTLLIADVDPDERPEDEDEYYDHQLIDLDVVTEDGTEVGRITEISHLPTQDLFVVERPDGSEVYVPFVSEIVTGIDLDAQRAVIDPPPGLIDDRAEIASARDAGAEDAGDEA.

The region spanning Glu93–Leu166 is the PRC barrel domain.

The protein belongs to the RimM family. Binds ribosomal protein uS19.

It localises to the cytoplasm. Functionally, an accessory protein needed during the final step in the assembly of 30S ribosomal subunit, possibly for assembly of the head region. Essential for efficient processing of 16S rRNA. May be needed both before and after RbfA during the maturation of 16S rRNA. It has affinity for free ribosomal 30S subunits but not for 70S ribosomes. In Streptomyces coelicolor (strain ATCC BAA-471 / A3(2) / M145), this protein is Ribosome maturation factor RimM.